We begin with the raw amino-acid sequence, 200 residues long: Holliday junction branch migration complex subunit RuvA (200 aa).

The segment at 1 to 63 (MIALVQGRVA…EDSLTLFGFA (63 aa)) is domain I. Positions 64 to 138 (DADERDVFEL…DRLGPAQGAA (75 aa)) are domain II. Residues 138–142 (APAAP) form a flexible linker region. The interval 143–200 (VAVDDGADVVDALVGLGWPVRQAQDAVRGVLEDADGTAPDAAGLLRAALRSLAGDARG) is domain III.

The protein belongs to the RuvA family. As to quaternary structure, homotetramer. Forms an RuvA(8)-RuvB(12)-Holliday junction (HJ) complex. HJ DNA is sandwiched between 2 RuvA tetramers; dsDNA enters through RuvA and exits via RuvB. An RuvB hexamer assembles on each DNA strand where it exits the tetramer. Each RuvB hexamer is contacted by two RuvA subunits (via domain III) on 2 adjacent RuvB subunits; this complex drives branch migration. In the full resolvosome a probable DNA-RuvA(4)-RuvB(12)-RuvC(2) complex forms which resolves the HJ.

The protein resides in the cytoplasm. Functionally, the RuvA-RuvB-RuvC complex processes Holliday junction (HJ) DNA during genetic recombination and DNA repair, while the RuvA-RuvB complex plays an important role in the rescue of blocked DNA replication forks via replication fork reversal (RFR). RuvA specifically binds to HJ cruciform DNA, conferring on it an open structure. The RuvB hexamer acts as an ATP-dependent pump, pulling dsDNA into and through the RuvAB complex. HJ branch migration allows RuvC to scan DNA until it finds its consensus sequence, where it cleaves and resolves the cruciform DNA. The chain is Holliday junction branch migration complex subunit RuvA from Beutenbergia cavernae (strain ATCC BAA-8 / DSM 12333 / CCUG 43141 / JCM 11478 / NBRC 16432 / NCIMB 13614 / HKI 0122).